Reading from the N-terminus, the 123-residue chain is Large ribosomal subunit protein uL14 (123 aa).

This sequence belongs to the universal ribosomal protein uL14 family. Part of the 50S ribosomal subunit. Forms a cluster with proteins L3 and L19. In the 70S ribosome, L14 and L19 interact and together make contacts with the 16S rRNA in bridges B5 and B8.

Functionally, binds to 23S rRNA. Forms part of two intersubunit bridges in the 70S ribosome. The chain is Large ribosomal subunit protein uL14 from Zymomonas mobilis subsp. mobilis (strain ATCC 31821 / ZM4 / CP4).